The primary structure comprises 590 residues: Pentatricopeptide repeat-containing protein At2g46050, mitochondrial (590 aa).

The transit peptide at 1–109 (MRFTFLRSTR…RNIVTWNILI (109 aa)) directs the protein to the mitochondrion. 11 PPR repeats span residues 141–175 (DHVS…GLES), 176–206 (SCFP…VLDR), 207–241 (DLVL…KNRF), 244–266 (DYFT…IHAI), 275–305 (DIPV…MVVR), 306–340 (NVVS…NLQP), 341–375 (DELT…GSAD), 376–406 (FLSV…IREP), 407–437 (DLVS…MLQK), 441–471 (DKIT…MTEF), and 477–507 (EDEH…MPTE). The segment at 512-588 (ALAAFTGGCN…TPGCSWLGDY (77 aa)) is type E motif.

It belongs to the PPR family. PCMP-E subfamily.

It is found in the mitochondrion. The protein is Pentatricopeptide repeat-containing protein At2g46050, mitochondrial (PCMP-E39) of Arabidopsis thaliana (Mouse-ear cress).